The sequence spans 465 residues: ATP synthase subunit beta (465 aa).

154–161 (GGAGVGKT) is a binding site for ATP.

It belongs to the ATPase alpha/beta chains family. F-type ATPases have 2 components, CF(1) - the catalytic core - and CF(0) - the membrane proton channel. CF(1) has five subunits: alpha(3), beta(3), gamma(1), delta(1), epsilon(1). CF(0) has three main subunits: a(1), b(2) and c(9-12). The alpha and beta chains form an alternating ring which encloses part of the gamma chain. CF(1) is attached to CF(0) by a central stalk formed by the gamma and epsilon chains, while a peripheral stalk is formed by the delta and b chains.

It is found in the cell inner membrane. The catalysed reaction is ATP + H2O + 4 H(+)(in) = ADP + phosphate + 5 H(+)(out). In terms of biological role, produces ATP from ADP in the presence of a proton gradient across the membrane. The catalytic sites are hosted primarily by the beta subunits. The sequence is that of ATP synthase subunit beta from Methylobacillus flagellatus (strain ATCC 51484 / DSM 6875 / VKM B-1610 / KT).